We begin with the raw amino-acid sequence, 716 residues long: Phosphoribosylformylglycinamidine synthase subunit PurL (716 aa).

Residue histidine 34 is part of the active site. Tyrosine 37 provides a ligand contact to ATP. Position 78 (glutamate 78) interacts with Mg(2+). Residues 79–82 and arginine 101 contribute to the substrate site; that span reads SHNH. Histidine 80 serves as the catalytic Proton acceptor. Aspartate 102 contacts Mg(2+). Glutamine 226 is a substrate binding site. Aspartate 254 serves as a coordination point for Mg(2+). 298–300 serves as a coordination point for substrate; that stretch reads ESQ. The ATP site is built by aspartate 474 and glycine 511. A Mg(2+)-binding site is contributed by asparagine 512. Serine 514 serves as a coordination point for substrate.

The protein belongs to the FGAMS family. In terms of assembly, monomer. Part of the FGAM synthase complex composed of 1 PurL, 1 PurQ and 2 PurS subunits.

The protein resides in the cytoplasm. The catalysed reaction is N(2)-formyl-N(1)-(5-phospho-beta-D-ribosyl)glycinamide + L-glutamine + ATP + H2O = 2-formamido-N(1)-(5-O-phospho-beta-D-ribosyl)acetamidine + L-glutamate + ADP + phosphate + H(+). It functions in the pathway purine metabolism; IMP biosynthesis via de novo pathway; 5-amino-1-(5-phospho-D-ribosyl)imidazole from N(2)-formyl-N(1)-(5-phospho-D-ribosyl)glycinamide: step 1/2. Its function is as follows. Part of the phosphoribosylformylglycinamidine synthase complex involved in the purines biosynthetic pathway. Catalyzes the ATP-dependent conversion of formylglycinamide ribonucleotide (FGAR) and glutamine to yield formylglycinamidine ribonucleotide (FGAM) and glutamate. The FGAM synthase complex is composed of three subunits. PurQ produces an ammonia molecule by converting glutamine to glutamate. PurL transfers the ammonia molecule to FGAR to form FGAM in an ATP-dependent manner. PurS interacts with PurQ and PurL and is thought to assist in the transfer of the ammonia molecule from PurQ to PurL. In Methanobrevibacter smithii (strain ATCC 35061 / DSM 861 / OCM 144 / PS), this protein is Phosphoribosylformylglycinamidine synthase subunit PurL.